The following is a 256-amino-acid chain: Acetyl-coenzyme A carboxylase carboxyl transferase subunit alpha (256 aa).

The 236-residue stretch at 1-236 folds into the CoA carboxyltransferase C-terminal domain; the sequence is MTDVARILKE…RSHLIDEITQ (236 aa).

The protein belongs to the AccA family. In terms of assembly, acetyl-CoA carboxylase is a heterohexamer composed of biotin carboxyl carrier protein (AccB), biotin carboxylase (AccC) and two subunits each of ACCase subunit alpha (AccA) and ACCase subunit beta (AccD).

It is found in the cytoplasm. It catalyses the reaction N(6)-carboxybiotinyl-L-lysyl-[protein] + acetyl-CoA = N(6)-biotinyl-L-lysyl-[protein] + malonyl-CoA. It functions in the pathway lipid metabolism; malonyl-CoA biosynthesis; malonyl-CoA from acetyl-CoA: step 1/1. Functionally, component of the acetyl coenzyme A carboxylase (ACC) complex. First, biotin carboxylase catalyzes the carboxylation of biotin on its carrier protein (BCCP) and then the CO(2) group is transferred by the carboxyltransferase to acetyl-CoA to form malonyl-CoA. This Streptococcus equi subsp. zooepidemicus (strain MGCS10565) protein is Acetyl-coenzyme A carboxylase carboxyl transferase subunit alpha.